The primary structure comprises 466 residues: Uronate isomerase (466 aa).

This sequence belongs to the metallo-dependent hydrolases superfamily. Uronate isomerase family.

It catalyses the reaction D-glucuronate = D-fructuronate. The catalysed reaction is aldehydo-D-galacturonate = keto-D-tagaturonate. Its pathway is carbohydrate metabolism; pentose and glucuronate interconversion. The sequence is that of Uronate isomerase from Lachnoclostridium phytofermentans (strain ATCC 700394 / DSM 18823 / ISDg) (Clostridium phytofermentans).